The primary structure comprises 61 residues: Small ribosomal subunit protein uS14 (61 aa).

Residues C24, C27, C40, and C43 each contribute to the Zn(2+) site.

This sequence belongs to the universal ribosomal protein uS14 family. Zinc-binding uS14 subfamily. As to quaternary structure, part of the 30S ribosomal subunit. Contacts proteins S3 and S10. Requires Zn(2+) as cofactor.

Its function is as follows. Binds 16S rRNA, required for the assembly of 30S particles and may also be responsible for determining the conformation of the 16S rRNA at the A site. The chain is Small ribosomal subunit protein uS14 from Kosmotoga olearia (strain ATCC BAA-1733 / DSM 21960 / TBF 19.5.1).